The sequence spans 207 residues: Strobilurin A biosynthesis cluster protein r1 (207 aa).

Transmembrane regions (helical) follow at residues 108 to 128 and 169 to 189; these read FIFPSLALKTTIWSVAGLLYL and NLTTGVSYVLGTLVFGFPFWI.

It is found in the membrane. It functions in the pathway mycotoxin biosynthesis. In terms of biological role, part of the gene cluster that mediates the biosynthesis of strobilurin A, an antifungal polyketide that contains a key beta-methoxyacrylate toxophore that targets the complex III of the mitochondrial electron transport chain. Strobilurin biosynthesis begins with construction of benzoyl CoA by step-wise elimination of ammonia from phenylalanine by the phenylalanine ammonia-lyase str11, oxygenation by str8 and retro-Claisen reaction to form benzoic acid, which is activated to its CoA thiolester benzoyl CoA by the dedicated CoA ligase str10. Benzoyl CoA forms the starter unit for the highly reducing polyketide synthase stpks1 that produces the polyketide prestrobilutin A. The FAD-dependent oxygenase str9 then catalyzes the key oxidative rearrangement responsible for the creation of the beta-methoxyacrylate toxophore. Str9 performs epoxidation of the 2,3 olefin of prestrobilutin A, followed by Meinwald rearrangement to furnish the aldehyde intermediate. Rapid enolization of the aldehyde intermediate would give the beta-methoxyacrylate skeleton and methylations catalyzed by str2 and str3 complete the synthesis and lead to the production of strobilurin A. The short-chain dehydrogenase stl2 and the dehydrogenase str4 play a role in the shunt pathway leading to the production of bolineol. The cluster encodes no obvious halogenase gene that could be involved in production of strobilurin B, nor any obvious dimethylallyl-transferase that could be involved in the production of strobilurin G. It is possible that unknown proteins encoded in, or near, the cluster (such as str1 or stl1) may form new classes of halogenases or dimethylally-transferases, or that the responsible genes are located elsewhere on the genome. Similarly, proteins encoded by str5/str6 hydrolases appear to have no chemical role in the biosynthesis of strobilurin A. Finally, no obvious self-resistance gene is found within the cluster. This Strobilurus tenacellus protein is Strobilurin A biosynthesis cluster protein r1.